A 498-amino-acid polypeptide reads, in one-letter code: Acetyl-coenzyme A carboxylase carboxyl transferase subunit beta, chloroplastic (498 aa).

The CoA carboxyltransferase N-terminal domain occupies 228-498; that stretch reads LWVQCEICYG…LNHNLSRTLT (271 aa). 4 residues coordinate Zn(2+): Cys232, Cys235, Cys251, and Cys254. Residues 232–254 form a C4-type zinc finger; sequence CEICYGLNYKKFFKSKMNICEQC.

This sequence belongs to the AccD/PCCB family. Acetyl-CoA carboxylase is a heterohexamer composed of biotin carboxyl carrier protein, biotin carboxylase and 2 subunits each of ACCase subunit alpha and ACCase plastid-coded subunit beta (accD). Requires Zn(2+) as cofactor.

The protein resides in the plastid. The protein localises to the chloroplast stroma. The enzyme catalyses N(6)-carboxybiotinyl-L-lysyl-[protein] + acetyl-CoA = N(6)-biotinyl-L-lysyl-[protein] + malonyl-CoA. It participates in lipid metabolism; malonyl-CoA biosynthesis; malonyl-CoA from acetyl-CoA: step 1/1. In terms of biological role, component of the acetyl coenzyme A carboxylase (ACC) complex. Biotin carboxylase (BC) catalyzes the carboxylation of biotin on its carrier protein (BCCP) and then the CO(2) group is transferred by the transcarboxylase to acetyl-CoA to form malonyl-CoA. The polypeptide is Acetyl-coenzyme A carboxylase carboxyl transferase subunit beta, chloroplastic (Populus alba (White poplar)).